A 207-amino-acid chain; its full sequence is Small ribosomal subunit protein uS4 (207 aa).

Residues 30–53 are disordered; that stretch reads DKSKFDTKPGQHGRTSGQRTSDFG. Over residues 42–52 the composition is skewed to polar residues; sequence GRTSGQRTSDF. The 61-residue stretch at 97 to 157 folds into the S4 RNA-binding domain; it reads SRLDNVVYRM…EKSKKQARIV (61 aa).

Belongs to the universal ribosomal protein uS4 family. In terms of assembly, part of the 30S ribosomal subunit. Contacts protein S5. The interaction surface between S4 and S5 is involved in control of translational fidelity.

Functionally, one of the primary rRNA binding proteins, it binds directly to 16S rRNA where it nucleates assembly of the body of the 30S subunit. In terms of biological role, with S5 and S12 plays an important role in translational accuracy. The protein is Small ribosomal subunit protein uS4 of Delftia acidovorans (strain DSM 14801 / SPH-1).